Consider the following 312-residue polypeptide: Glycerol-3-phosphate dehydrogenase [NAD(P)+] (312 aa).

Positions 11, 30, 31, and 95 each coordinate NADPH. Positions 95, 123, and 125 each coordinate sn-glycerol 3-phosphate. Alanine 127 provides a ligand contact to NADPH. 5 residues coordinate sn-glycerol 3-phosphate: lysine 177, aspartate 230, serine 240, arginine 241, and asparagine 242. Lysine 177 acts as the Proton acceptor in catalysis. Arginine 241 provides a ligand contact to NADPH. The NADPH site is built by valine 265 and glutamate 267.

Belongs to the NAD-dependent glycerol-3-phosphate dehydrogenase family.

The protein localises to the cytoplasm. It catalyses the reaction sn-glycerol 3-phosphate + NAD(+) = dihydroxyacetone phosphate + NADH + H(+). It carries out the reaction sn-glycerol 3-phosphate + NADP(+) = dihydroxyacetone phosphate + NADPH + H(+). It functions in the pathway membrane lipid metabolism; glycerophospholipid metabolism. Its function is as follows. Catalyzes the reduction of the glycolytic intermediate dihydroxyacetone phosphate (DHAP) to sn-glycerol 3-phosphate (G3P), the key precursor for phospholipid synthesis. The chain is Glycerol-3-phosphate dehydrogenase [NAD(P)+] from Helicobacter acinonychis (strain Sheeba).